We begin with the raw amino-acid sequence, 506 residues long: Cytochrome P450 monooxygenase TES1 (506 aa).

A helical transmembrane segment spans residues 26–46 (MSVVLAGLILLASIYFPRFMF). Residues asparagine 167, asparagine 201, asparagine 298, and asparagine 427 are each glycosylated (N-linked (GlcNAc...) asparagine). Cysteine 440 contributes to the heme binding site.

Belongs to the cytochrome P450 family. Heme serves as cofactor.

It is found in the membrane. It participates in phytotoxin biosynthesis. Its function is as follows. Cytochrome P450 monooxygenase; part of the gene cluster that mediates the biosynthesis of the phytotoxin tentoxin, an inhibitor the F1-ATPase activity of chloroplasts, resulting in chlorosis in sensitive plants. Tentoxin is a cyclic tetrapeptide that consists of four amino acid residues: glycine (Gly), alanine (Ala), leucine (Leu), and dehydrophenylalanine (DPhe). In addition, both the Ala and DPhe residues are N-methylated. The nonribosomal peptide synthetase TES assembles tentoxin from the four substrate amino acids. The adenylation domains of each of the 4 modules are responsible for the activation of Gly, Ala, Leu and DPhe, respectively. In addition, the N-methyltransferase domains in the second and fourth modules of TES could be responsible for N-methylation of Ala and DPhe residues. Finally, the condensation domain located in the termination module probably catalyzes the formation of the intramolecular macrocyclization and then the release of tentoxin. The cytochrome P450 monooxygenase TES1 is predicted to be involved in the formation of DPhe. The sequence is that of Cytochrome P450 monooxygenase TES1 from Alternaria alternata (Alternaria rot fungus).